Here is a 351-residue protein sequence, read N- to C-terminus: L-threonine 3-dehydrogenase (351 aa).

Residue Cys39 participates in Zn(2+) binding. Residues Thr41 and His44 each act as charge relay system in the active site. Zn(2+)-binding residues include His64, Glu65, Cys94, Cys97, Cys100, and Cys108. Residues Ile176, Asp196, Arg201, 271–273, and 295–296 contribute to the NAD(+) site; these read LGI and IY.

This sequence belongs to the zinc-containing alcohol dehydrogenase family. As to quaternary structure, homotetramer. Zn(2+) is required as a cofactor.

Its subcellular location is the cytoplasm. The enzyme catalyses L-threonine + NAD(+) = (2S)-2-amino-3-oxobutanoate + NADH + H(+). It participates in amino-acid degradation; L-threonine degradation via oxydo-reductase pathway; glycine from L-threonine: step 1/2. Catalyzes the NAD(+)-dependent oxidation of L-threonine to 2-amino-3-ketobutyrate. This chain is L-threonine 3-dehydrogenase, found in Francisella tularensis subsp. novicida (strain U112).